We begin with the raw amino-acid sequence, 294 residues long: Cytidine deaminase (294 aa).

CMP/dCMP-type deaminase domains lie at 48 to 168 and 186 to 294; these read DEDA…FGPK and LTGD…VLLA. 89-91 contacts substrate; sequence NME. His-102 is a binding site for Zn(2+). Glu-104 serves as the catalytic Proton donor. The Zn(2+) site is built by Cys-129 and Cys-132.

Belongs to the cytidine and deoxycytidylate deaminase family. In terms of assembly, homodimer. Zn(2+) is required as a cofactor.

It carries out the reaction cytidine + H2O + H(+) = uridine + NH4(+). It catalyses the reaction 2'-deoxycytidine + H2O + H(+) = 2'-deoxyuridine + NH4(+). In terms of biological role, this enzyme scavenges exogenous and endogenous cytidine and 2'-deoxycytidine for UMP synthesis. The sequence is that of Cytidine deaminase from Escherichia coli O157:H7.